The chain runs to 178 residues: Interleukin-10 (178 aa).

An N-terminal signal peptide occupies residues 1 to 18 (MHSSALLCCLVLLTGVRA). 2 disulfide bridges follow: Cys30/Cys126 and Cys80/Cys132. Residue Asn134 is glycosylated (N-linked (GlcNAc...) asparagine).

It belongs to the IL-10 family. In terms of assembly, homodimer. Interacts with IL10RA and IL10RB.

Its subcellular location is the secreted. Its function is as follows. Major immune regulatory cytokine that acts on many cells of the immune system where it has profound anti-inflammatory functions, limiting excessive tissue disruption caused by inflammation. Mechanistically, IL10 binds to its heterotetrameric receptor comprising IL10RA and IL10RB leading to JAK1 and STAT2-mediated phosphorylation of STAT3. In turn, STAT3 translocates to the nucleus where it drives expression of anti-inflammatory mediators. Targets antigen-presenting cells (APCs) such as macrophages and monocytes and inhibits their release of pro-inflammatory cytokines including granulocyte-macrophage colony-stimulating factor /GM-CSF, granulocyte colony-stimulating factor/G-CSF, IL-1 alpha, IL-1 beta, IL-6, IL-8 and TNF-alpha. Also interferes with antigen presentation by reducing the expression of MHC-class II and co-stimulatory molecules, thereby inhibiting their ability to induce T cell activation. In addition, controls the inflammatory response of macrophages by reprogramming essential metabolic pathways including mTOR signaling. The sequence is that of Interleukin-10 (IL10) from Macaca mulatta (Rhesus macaque).